Consider the following 396-residue polypeptide: 1-deoxy-D-xylulose 5-phosphate reductoisomerase (396 aa).

4 residues coordinate NADPH: threonine 15, glycine 16, isoleucine 18, and asparagine 127. Lysine 128 lines the 1-deoxy-D-xylulose 5-phosphate pocket. NADPH is bound at residue glutamate 129. Position 153 (aspartate 153) interacts with Mn(2+). Serine 154, glutamate 155, serine 177, and histidine 200 together coordinate 1-deoxy-D-xylulose 5-phosphate. Glutamate 155 serves as a coordination point for Mn(2+). Glycine 206 lines the NADPH pocket. 1-deoxy-D-xylulose 5-phosphate contacts are provided by serine 213, asparagine 218, lysine 219, and glutamate 222. Residue glutamate 222 participates in Mn(2+) binding.

The protein belongs to the DXR family. Mg(2+) serves as cofactor. The cofactor is Mn(2+).

It carries out the reaction 2-C-methyl-D-erythritol 4-phosphate + NADP(+) = 1-deoxy-D-xylulose 5-phosphate + NADPH + H(+). The protein operates within isoprenoid biosynthesis; isopentenyl diphosphate biosynthesis via DXP pathway; isopentenyl diphosphate from 1-deoxy-D-xylulose 5-phosphate: step 1/6. Catalyzes the NADPH-dependent rearrangement and reduction of 1-deoxy-D-xylulose-5-phosphate (DXP) to 2-C-methyl-D-erythritol 4-phosphate (MEP). The protein is 1-deoxy-D-xylulose 5-phosphate reductoisomerase of Anaplasma marginale (strain Florida).